We begin with the raw amino-acid sequence, 156 residues long: Small ribosomal subunit protein uS7 (156 aa).

This sequence belongs to the universal ribosomal protein uS7 family. In terms of assembly, part of the 30S ribosomal subunit. Contacts proteins S9 and S11.

In terms of biological role, one of the primary rRNA binding proteins, it binds directly to 16S rRNA where it nucleates assembly of the head domain of the 30S subunit. Is located at the subunit interface close to the decoding center, probably blocks exit of the E-site tRNA. This is Small ribosomal subunit protein uS7 from Lactobacillus johnsonii (strain CNCM I-12250 / La1 / NCC 533).